Reading from the N-terminus, the 413-residue chain is Histidine--tRNA ligase (413 aa).

The protein belongs to the class-II aminoacyl-tRNA synthetase family. Homodimer.

Its subcellular location is the cytoplasm. The catalysed reaction is tRNA(His) + L-histidine + ATP = L-histidyl-tRNA(His) + AMP + diphosphate + H(+). The sequence is that of Histidine--tRNA ligase from Neorickettsia sennetsu (strain ATCC VR-367 / Miyayama) (Ehrlichia sennetsu).